The sequence spans 40 residues: Photosystem II reaction center protein J (40 aa).

A helical transmembrane segment spans residues 10–30 (LWIIGTVTGILVIGLIGIFFF).

Belongs to the PsbJ family. PSII is composed of 1 copy each of membrane proteins PsbA, PsbB, PsbC, PsbD, PsbE, PsbF, PsbH, PsbI, PsbJ, PsbK, PsbL, PsbM, PsbT, PsbX, PsbY, PsbZ, Psb30/Ycf12, at least 3 peripheral proteins of the oxygen-evolving complex and a large number of cofactors. It forms dimeric complexes.

The protein resides in the plastid membrane. In terms of biological role, one of the components of the core complex of photosystem II (PSII). PSII is a light-driven water:plastoquinone oxidoreductase that uses light energy to abstract electrons from H(2)O, generating O(2) and a proton gradient subsequently used for ATP formation. It consists of a core antenna complex that captures photons, and an electron transfer chain that converts photonic excitation into a charge separation. The protein is Photosystem II reaction center protein J of Cuscuta exaltata (Tall dodder).